Reading from the N-terminus, the 373-residue chain is Glutamate 5-kinase 2 (373 aa).

Lys-11 is an ATP binding site. Ser-51, Asp-138, and Asn-150 together coordinate substrate. Residues Ser-170 to Asp-171 and Thr-212 to Lys-218 each bind ATP. Residues Glu-279 to Gln-355 enclose the PUA domain.

This sequence belongs to the glutamate 5-kinase family.

Its subcellular location is the cytoplasm. It catalyses the reaction L-glutamate + ATP = L-glutamyl 5-phosphate + ADP. It functions in the pathway amino-acid biosynthesis; L-proline biosynthesis; L-glutamate 5-semialdehyde from L-glutamate: step 1/2. Its function is as follows. Catalyzes the transfer of a phosphate group to glutamate to form L-glutamate 5-phosphate. This Bacillus licheniformis (strain ATCC 14580 / DSM 13 / JCM 2505 / CCUG 7422 / NBRC 12200 / NCIMB 9375 / NCTC 10341 / NRRL NRS-1264 / Gibson 46) protein is Glutamate 5-kinase 2.